A 266-amino-acid polypeptide reads, in one-letter code: Short-chain dehydrogenase/reductase tropE (266 aa).

Residues Leu18, Asp69, and Asn96 each contribute to the NADP(+) site. Ser147 (proton donor) is an active-site residue. Positions 181, 185, and 216 each coordinate NADP(+). The Proton acceptor role is filled by Tyr181. Residue Lys185 is the Lowers pKa of active site Tyr of the active site.

The protein belongs to the short-chain dehydrogenases/reductases (SDR) family.

It participates in secondary metabolite biosynthesis. Its function is as follows. Short-chain dehydrogenase/reductase; part of the gene cluster that mediates the biosynthesis of the tropolone class of fungal maleic anhydrides. The pathway begins with the synthesis of 3-methylorcinaldehyde by the non-reducing polyketide synthase (PKS) tropA. 3-methylorcinaldehyde is the substrate for the FAD-dependent monooxygenase tropB to yield a dearomatized hydroxycyclohexadione. The 2-oxoglutarate-dependent dioxygenase tropC then performs the oxidative ring expansion to provide the first tropolone metabolite stipitaldehyde. Trop D converts stipitaldehyde into stipitacetal which is in turn converted to stipitalide by the short-chain dehydrogenase/reductase tropE. The next steps involve tropF, tropG, tropH, tropI and tropJ to form successive tropolone maleic anhydrides including stipitaldehydic, stipitatonic and stipitatic acids. In Talaromyces stipitatus (strain ATCC 10500 / CBS 375.48 / QM 6759 / NRRL 1006) (Penicillium stipitatum), this protein is Short-chain dehydrogenase/reductase tropE.